Consider the following 416-residue polypeptide: Caspase-9 (416 aa).

The region spanning Met1 to Asn92 is the CARD domain. The residue at position 125 (Thr125) is a Phosphothreonine; by MAPK1. The residue at position 153 (Tyr153) is a Phosphotyrosine; by ABL1. Active-site residues include His237 and Cys287. Positions His294–Gln320 are disordered. A phosphoserine mark is found at Ser302, Ser307, and Ser310. Residues Ala316–Asp330 constitute a propeptide that is removed on maturation. Arg355 carries the post-translational modification (Microbial infection) ADP-riboxanated arginine.

Belongs to the peptidase C14A family. As to quaternary structure, heterotetramer that consists of two anti-parallel arranged heterodimers, each one formed by a 35 kDa (p35) and a 10 kDa (p10) subunit. Caspase-9 and APAF1 bind to each other via their respective NH2-terminal CED-3 homologous domains in the presence of cytochrome C and ATP. Interacts (inactive form) with EFHD2. Interacts with HAX1. Interacts with BIRC2/c-IAP1, XIAP/BIRC4, BIRC5/survivin, BIRC6/bruce and BIRC7/livin. Interacts with ABL1 (via SH3 domain); the interaction is direct and increases in the response of cells to genotoxic stress and ABL1/c-Abl activation. Interacts with BCL2L10. Interacts with NleF from pathogenic E.coli. In terms of processing, cleavages at Asp-315 by granzyme B and at Asp-330 by caspase-3 generate the two active subunits. Caspase-8 and -10 can also be involved in these processing events. Post-translationally, phosphorylated at Thr-125 by MAPK1/ERK2. Phosphorylation at Thr-125 is sufficient to block caspase-9 processing and subsequent caspase-3 activation. Phosphorylation on Tyr-153 by ABL1/c-Abl; occurs in the response of cells to DNA damage. (Microbial infection) ADP-riboxanation by C.violaceum CopC blocks CASP9 processing, preventing CASP9 activation and ability to mediate intrinsic apoptosis. In terms of processing, ubiquitinated by BIRC6; this activity is inhibited by DIABLO/SMAC. In terms of tissue distribution, ubiquitous, with highest expression in the heart, moderate expression in liver, skeletal muscle, and pancreas. Low levels in all other tissues. Within the heart, specifically expressed in myocytes.

It catalyses the reaction Strict requirement for an Asp residue at position P1 and with a marked preference for His at position P2. It has a preferred cleavage sequence of Leu-Gly-His-Asp-|-Xaa.. With respect to regulation, inhibited by the effector protein NleF that is produced by pathogenic E.coli; this inhibits apoptosis. Inhibited by BIRC6; following inhibition of BIRC6-caspase binding by DIABLO/SMAC, BIRC6 is subjected to caspase cleavage, leading to an increase in active caspases. Its function is as follows. Involved in the activation cascade of caspases responsible for apoptosis execution. Binding of caspase-9 to Apaf-1 leads to activation of the protease which then cleaves and activates effector caspases caspase-3 (CASP3) or caspase-7 (CASP7). Promotes DNA damage-induced apoptosis in a ABL1/c-Abl-dependent manner. Proteolytically cleaves poly(ADP-ribose) polymerase (PARP). Cleaves BIRC6 following inhibition of BIRC6-caspase binding by DIABLO/SMAC. Functionally, lacks activity is an dominant-negative inhibitor of caspase-9. The sequence is that of Caspase-9 (CASP9) from Homo sapiens (Human).